We begin with the raw amino-acid sequence, 751 residues long: Photosystem I P700 chlorophyll a apoprotein A1 (751 aa).

8 helical membrane passes run 73–96 (VFSAHFGQLGIIFIWLSGMYFHGA), 159–182 (LYTTAIGGLVMAAAMFFAGWFHYH), 198–222 (LNHHLAGLLGLGSLAWAGHQIHVSL), 294–312 (TVHHHLAIAVLFLVAGHQY), 349–372 (WHAQLAINLALFGSLSIIVSHHMY), 388–414 (LSLFTHHMWIGGFCIVGAGAHAGIFMV), 436–458 (AMISHLNWVCIFLGFHSFGLYIH), and 533–551 (FMVHHIHAFTIHVTVLILL). 2 residues coordinate [4Fe-4S] cluster: Cys-575 and Cys-584. 2 helical membrane-spanning segments follow: residues 591-612 (HVFLGLFWMYNSISIVIFHFSW) and 665-687 (LSAYGLIFLGAHFVWAFSLMFLF). His-676 serves as a coordination point for chlorophyll a'. Positions 684 and 692 each coordinate chlorophyll a. Position 693 (Trp-693) interacts with phylloquinone. The chain crosses the membrane as a helical span at residues 725-745 (AVGVAHYLLGGIATTWSFFLA).

The protein belongs to the PsaA/PsaB family. As to quaternary structure, the PsaA/B heterodimer binds the P700 chlorophyll special pair and subsequent electron acceptors. PSI consists of a core antenna complex that captures photons, and an electron transfer chain that converts photonic excitation into a charge separation. The eukaryotic PSI reaction center is composed of at least 11 subunits. It depends on P700 is a chlorophyll a/chlorophyll a' dimer, A0 is one or more chlorophyll a, A1 is one or both phylloquinones and FX is a shared 4Fe-4S iron-sulfur center. as a cofactor.

The protein localises to the plastid. It localises to the chloroplast thylakoid membrane. The catalysed reaction is reduced [plastocyanin] + hnu + oxidized [2Fe-2S]-[ferredoxin] = oxidized [plastocyanin] + reduced [2Fe-2S]-[ferredoxin]. Its function is as follows. PsaA and PsaB bind P700, the primary electron donor of photosystem I (PSI), as well as the electron acceptors A0, A1 and FX. PSI is a plastocyanin/cytochrome c6-ferredoxin oxidoreductase, converting photonic excitation into a charge separation, which transfers an electron from the donor P700 chlorophyll pair to the spectroscopically characterized acceptors A0, A1, FX, FA and FB in turn. Oxidized P700 is reduced on the lumenal side of the thylakoid membrane by plastocyanin or cytochrome c6. The protein is Photosystem I P700 chlorophyll a apoprotein A1 of Chlorella vulgaris (Green alga).